We begin with the raw amino-acid sequence, 71 residues long: Beta-defensin 7 (71 aa).

Positions 1–22 (MRIHYVLFAFLLVLLSPFAAFS) are cleaved as a signal peptide. Position 23 is a pyrrolidone carboxylic acid (glutamine 23). The propeptide occupies 23–25 (QDI). Disulfide bonds link cysteine 31-cysteine 58, cysteine 38-cysteine 52, and cysteine 42-cysteine 59.

This sequence belongs to the beta-defensin family. LAP/TAP subfamily.

The protein resides in the secreted. Its function is as follows. Has bactericidal activity. In Mus musculus (Mouse), this protein is Beta-defensin 7 (Defb7).